A 253-amino-acid polypeptide reads, in one-letter code: 5'/3'-nucleotidase SurE (253 aa).

A divalent metal cation is bound by residues D8, D9, S39, and N92.

This sequence belongs to the SurE nucleotidase family. A divalent metal cation serves as cofactor.

Its subcellular location is the cytoplasm. The catalysed reaction is a ribonucleoside 5'-phosphate + H2O = a ribonucleoside + phosphate. It carries out the reaction a ribonucleoside 3'-phosphate + H2O = a ribonucleoside + phosphate. The enzyme catalyses [phosphate](n) + H2O = [phosphate](n-1) + phosphate + H(+). Its function is as follows. Nucleotidase with a broad substrate specificity as it can dephosphorylate various ribo- and deoxyribonucleoside 5'-monophosphates and ribonucleoside 3'-monophosphates with highest affinity to 3'-AMP. Also hydrolyzes polyphosphate (exopolyphosphatase activity) with the preference for short-chain-length substrates (P20-25). Might be involved in the regulation of dNTP and NTP pools, and in the turnover of 3'-mononucleotides produced by numerous intracellular RNases (T1, T2, and F) during the degradation of various RNAs. This is 5'/3'-nucleotidase SurE from Shigella dysenteriae serotype 1 (strain Sd197).